We begin with the raw amino-acid sequence, 41 residues long: Inducible serine protease inhibitor 3 (41 aa).

Functionally, inhibits trypsin and the toxin proteases PR1 and PR2 of M.anisopliae. Does not inhibit chymotrypsin, subtilisin Carlsberg, proteinase K and porcine pancreatic elastase. The polypeptide is Inducible serine protease inhibitor 3 (Galleria mellonella (Greater wax moth)).